The chain runs to 397 residues: 1-deoxy-D-xylulose 5-phosphate reductoisomerase (397 aa).

NADPH-binding residues include serine 10, glycine 11, serine 12, isoleucine 13, alanine 36, arginine 37, and asparagine 124. A 1-deoxy-D-xylulose 5-phosphate-binding site is contributed by lysine 125. An NADPH-binding site is contributed by glutamate 126. Aspartate 150 contacts Mn(2+). 4 residues coordinate 1-deoxy-D-xylulose 5-phosphate: serine 151, glutamate 152, serine 186, and histidine 209. Glutamate 152 is a binding site for Mn(2+). Position 215 (glycine 215) interacts with NADPH. 1-deoxy-D-xylulose 5-phosphate-binding residues include serine 222, asparagine 227, lysine 228, and glutamate 231. Residue glutamate 231 participates in Mn(2+) binding.

Belongs to the DXR family. Mg(2+) is required as a cofactor. It depends on Mn(2+) as a cofactor.

It catalyses the reaction 2-C-methyl-D-erythritol 4-phosphate + NADP(+) = 1-deoxy-D-xylulose 5-phosphate + NADPH + H(+). Its pathway is isoprenoid biosynthesis; isopentenyl diphosphate biosynthesis via DXP pathway; isopentenyl diphosphate from 1-deoxy-D-xylulose 5-phosphate: step 1/6. In terms of biological role, catalyzes the NADPH-dependent rearrangement and reduction of 1-deoxy-D-xylulose-5-phosphate (DXP) to 2-C-methyl-D-erythritol 4-phosphate (MEP). The polypeptide is 1-deoxy-D-xylulose 5-phosphate reductoisomerase (Aeromonas hydrophila subsp. hydrophila (strain ATCC 7966 / DSM 30187 / BCRC 13018 / CCUG 14551 / JCM 1027 / KCTC 2358 / NCIMB 9240 / NCTC 8049)).